The sequence spans 514 residues: Mitochondrial-processing peptidase subunit alpha (514 aa).

Residues 1–55 (MLLRKSIPYIKICRDISASVRNNKEIAQKLPLSVPLPMENNSKSIEKGCPPMGRN) constitute a mitochondrion transit peptide.

The protein belongs to the peptidase M16 family. As to quaternary structure, heterodimer of mppa-1 (alpha) and mppb-1 (beta) subunits, forming the mitochondrial processing protease (MPP) in which mppa-1 is involved in substrate recognition and binding and mppb-1 is the catalytic subunit.

It localises to the mitochondrion matrix. In terms of biological role, substrate recognition and binding subunit of the essential mitochondrial processing protease (MPP), which cleaves the mitochondrial sequence off newly imported precursors proteins. This Caenorhabditis elegans protein is Mitochondrial-processing peptidase subunit alpha.